The following is a 264-amino-acid chain: Ribosomal RNA small subunit methyltransferase A (264 aa).

Positions 12, 14, 40, 61, 86, and 105 each coordinate S-adenosyl-L-methionine.

This sequence belongs to the class I-like SAM-binding methyltransferase superfamily. rRNA adenine N(6)-methyltransferase family. RsmA subfamily.

It is found in the cytoplasm. The enzyme catalyses adenosine(1518)/adenosine(1519) in 16S rRNA + 4 S-adenosyl-L-methionine = N(6)-dimethyladenosine(1518)/N(6)-dimethyladenosine(1519) in 16S rRNA + 4 S-adenosyl-L-homocysteine + 4 H(+). Functionally, specifically dimethylates two adjacent adenosines (A1518 and A1519) in the loop of a conserved hairpin near the 3'-end of 16S rRNA in the 30S particle. May play a critical role in biogenesis of 30S subunits. In Fusobacterium nucleatum subsp. nucleatum (strain ATCC 25586 / DSM 15643 / BCRC 10681 / CIP 101130 / JCM 8532 / KCTC 2640 / LMG 13131 / VPI 4355), this protein is Ribosomal RNA small subunit methyltransferase A.